Consider the following 160-residue polypeptide: Major strawberry allergen Fra a 1-E (160 aa).

Belongs to the BetVI family. As to quaternary structure, monomer. Interacts with AP. In terms of tissue distribution, highly expressed in roots. Expressed in open flowers. Expressed at low levels in leaves, flower buds and fruits.

Its function is as follows. Involved in the control of flavonoid biosynthesis in fruits, probably by binding directly to natural flavonoids. Binds the natural flavonoid quercetin-3-O-glucuronide with affinities in the low micromolar range. In Fragaria ananassa (Strawberry), this protein is Major strawberry allergen Fra a 1-E.